We begin with the raw amino-acid sequence, 157 residues long: SUMO-conjugating enzyme UBC9 (157 aa).

Serine 2 is subject to N-acetylserine. In terms of domain architecture, UBC core spans 4–157; sequence LCLQRLQEER…VLLQAKQYSK (154 aa). Cysteine 93 (glycyl thioester intermediate) is an active-site residue.

Belongs to the ubiquitin-conjugating enzyme family. As to quaternary structure, interacts with SIZ1.

It localises to the nucleus. Its pathway is protein modification; protein sumoylation. In terms of biological role, E2 ubiquitin-like--protein ligase mediating SUMO/Smt3 attachment to septins and PCNA. Seems to be involved in degradation of S- (CLB5) and M-phase cyclins (CLB2). This chain is SUMO-conjugating enzyme UBC9 (UBC9), found in Saccharomyces cerevisiae (strain ATCC 204508 / S288c) (Baker's yeast).